Reading from the N-terminus, the 429-residue chain is Gamma-glutamyl phosphate reductase (429 aa).

This sequence belongs to the gamma-glutamyl phosphate reductase family.

The protein localises to the cytoplasm. The catalysed reaction is L-glutamate 5-semialdehyde + phosphate + NADP(+) = L-glutamyl 5-phosphate + NADPH + H(+). It participates in amino-acid biosynthesis; L-proline biosynthesis; L-glutamate 5-semialdehyde from L-glutamate: step 2/2. Its function is as follows. Catalyzes the NADPH-dependent reduction of L-glutamate 5-phosphate into L-glutamate 5-semialdehyde and phosphate. The product spontaneously undergoes cyclization to form 1-pyrroline-5-carboxylate. The polypeptide is Gamma-glutamyl phosphate reductase (Bradyrhizobium sp. (strain BTAi1 / ATCC BAA-1182)).